The sequence spans 87 residues: UPF0473 protein Dred_0776 (87 aa).

Belongs to the UPF0473 family.

This is UPF0473 protein Dred_0776 from Desulforamulus reducens (strain ATCC BAA-1160 / DSM 100696 / MI-1) (Desulfotomaculum reducens).